Consider the following 272-residue polypeptide: Phosphatidylglycerol--prolipoprotein diacylglyceryl transferase (272 aa).

The next 7 helical transmembrane spans lie at Leu-17–Ala-37, Leu-55–Tyr-75, Val-90–Phe-110, Phe-125–Gly-145, Pro-174–Phe-194, Met-202–Phe-222, and Gly-230–Ile-250. Arg-138 is a binding site for a 1,2-diacyl-sn-glycero-3-phospho-(1'-sn-glycerol).

It belongs to the Lgt family.

Its subcellular location is the cell inner membrane. It carries out the reaction L-cysteinyl-[prolipoprotein] + a 1,2-diacyl-sn-glycero-3-phospho-(1'-sn-glycerol) = an S-1,2-diacyl-sn-glyceryl-L-cysteinyl-[prolipoprotein] + sn-glycerol 1-phosphate + H(+). The protein operates within protein modification; lipoprotein biosynthesis (diacylglyceryl transfer). In terms of biological role, catalyzes the transfer of the diacylglyceryl group from phosphatidylglycerol to the sulfhydryl group of the N-terminal cysteine of a prolipoprotein, the first step in the formation of mature lipoproteins. This is Phosphatidylglycerol--prolipoprotein diacylglyceryl transferase from Acinetobacter baumannii (strain ACICU).